A 183-amino-acid polypeptide reads, in one-letter code: Photosystem I assembly protein Ycf4 (183 aa).

The next 2 helical transmembrane spans lie at 17–39 (NYLL…FLSY) and 59–81 (FIPQ…IYIY).

This sequence belongs to the Ycf4 family.

The protein localises to the plastid. It is found in the chloroplast thylakoid membrane. Seems to be required for the assembly of the photosystem I complex. In Cyanidium caldarium (Red alga), this protein is Photosystem I assembly protein Ycf4.